The sequence spans 1770 residues: Transposon Ty2-OR1 Gag-Pol polyprotein (1770 aa).

2 stretches are compositionally biased toward polar residues: residues 1–39 (MESQ…SASN) and 49–60 (KVNSQQETTPGT). Disordered stretches follow at residues 1–88 (MESQ…YQQH) and 359–449 (QHSE…SNDE). The tract at residues 295 to 397 (ENNINVSDRL…SSKPRAAKAH (103 aa)) is RNA-binding. Residues 369-381 (TSPNTTNTKVTTR) show a composition bias toward low complexity. Composition is skewed to polar residues over residues 399–408 (IATSSKFSRV) and 415–435 (ESTV…GQQQ). The active-site For protease activity; shared with dimeric partner is the Asp457. The interval 579 to 636 (NVNKSKSVNKYPYPLIHRMLGHANFRSIQKSLKKNAVTYLKESDIEWSNASTYQCPDC) is integrase-type zinc finger-like. The Integrase catalytic domain maps to 656-831 (ESYEPFQYLH…AGLDITTILP (176 aa)). Mg(2+) contacts are provided by Asp667 and Asp732. 3 stretches are compositionally biased toward polar residues: residues 916-929 (FIEQ…YDQN), 1009-1024 (ESDT…FTAR), and 1065-1082 (QRNS…STPS). Disordered stretches follow at residues 916 to 935 (FIEQ…SDHD), 1005 to 1038 (GGTI…MIDL), and 1057 to 1205 (GGTE…TEIE). The Bipartite nuclear localization signal signature appears at 1193 to 1227 (KKRSLEDNETEIEVSRDTWNNKNMRSLEPPRSKKR). Residues 1353 to 1491 (NDYYITQLDI…DILGLEIKYQ (139 aa)) enclose the Reverse transcriptase Ty1/copia-type domain. Residues Asp1361, Asp1442, Asp1443, Asp1625, Glu1667, and Asp1700 each contribute to the Mg(2+) site. Residues 1625–1767 (DASYGNQPYY…IKTFKLLTNK (143 aa)) form the RNase H Ty1/copia-type domain.

The capsid protein forms a homotrimer, from which the VLPs are assembled. The protease is a homodimer, whose active site consists of two apposed aspartic acid residues. In terms of processing, initially, virus-like particles (VLPs) are composed of the structural unprocessed proteins Gag and Gag-Pol, and also contain the host initiator methionine tRNA (tRNA(i)-Met) which serves as a primer for minus-strand DNA synthesis, and a dimer of genomic Ty RNA. Processing of the polyproteins occurs within the particle and proceeds by an ordered pathway, called maturation. First, the protease (PR) is released by autocatalytic cleavage of the Gag-Pol polyprotein, and this cleavage is a prerequisite for subsequent processing at the remaining sites to release the mature structural and catalytic proteins. Maturation takes place prior to the RT reaction and is required to produce transposition-competent VLPs.

Its subcellular location is the cytoplasm. The protein localises to the nucleus. It carries out the reaction DNA(n) + a 2'-deoxyribonucleoside 5'-triphosphate = DNA(n+1) + diphosphate. The catalysed reaction is Endonucleolytic cleavage to 5'-phosphomonoester.. Functionally, capsid protein (CA) is the structural component of the virus-like particle (VLP), forming the shell that encapsulates the retrotransposons dimeric RNA genome. The particles are assembled from trimer-clustered units and there are holes in the capsid shells that allow for the diffusion of macromolecules. CA also has nucleocapsid-like chaperone activity, promoting primer tRNA(i)-Met annealing to the multipartite primer-binding site (PBS), dimerization of Ty2 RNA and initiation of reverse transcription. In terms of biological role, the aspartyl protease (PR) mediates the proteolytic cleavages of the Gag and Gag-Pol polyproteins after assembly of the VLP. Reverse transcriptase/ribonuclease H (RT) is a multifunctional enzyme that catalyzes the conversion of the retro-elements RNA genome into dsDNA within the VLP. The enzyme displays a DNA polymerase activity that can copy either DNA or RNA templates, and a ribonuclease H (RNase H) activity that cleaves the RNA strand of RNA-DNA heteroduplexes during plus-strand synthesis and hydrolyzes RNA primers. The conversion leads to a linear dsDNA copy of the retrotransposon that includes long terminal repeats (LTRs) at both ends. Its function is as follows. Integrase (IN) targets the VLP to the nucleus, where a subparticle preintegration complex (PIC) containing at least integrase and the newly synthesized dsDNA copy of the retrotransposon must transit the nuclear membrane. Once in the nucleus, integrase performs the integration of the dsDNA into the host genome. This chain is Transposon Ty2-OR1 Gag-Pol polyprotein (TY2B-OR1), found in Saccharomyces cerevisiae (strain ATCC 204508 / S288c) (Baker's yeast).